The chain runs to 638 residues: 1-deoxy-D-xylulose-5-phosphate synthase (638 aa).

Thiamine diphosphate is bound by residues His-71 and 112-114; that span reads SHA. Asp-144 lines the Mg(2+) pocket. Residues 145–146, Asn-173, Tyr-284, and Glu-365 each bind thiamine diphosphate; that span reads GA. A Mg(2+)-binding site is contributed by Asn-173.

The protein belongs to the transketolase family. DXPS subfamily. In terms of assembly, homodimer. It depends on Mg(2+) as a cofactor. Thiamine diphosphate is required as a cofactor.

It catalyses the reaction D-glyceraldehyde 3-phosphate + pyruvate + H(+) = 1-deoxy-D-xylulose 5-phosphate + CO2. It participates in metabolic intermediate biosynthesis; 1-deoxy-D-xylulose 5-phosphate biosynthesis; 1-deoxy-D-xylulose 5-phosphate from D-glyceraldehyde 3-phosphate and pyruvate: step 1/1. In terms of biological role, catalyzes the acyloin condensation reaction between C atoms 2 and 3 of pyruvate and glyceraldehyde 3-phosphate to yield 1-deoxy-D-xylulose-5-phosphate (DXP). This chain is 1-deoxy-D-xylulose-5-phosphate synthase, found in Mycobacterium sp. (strain JLS).